A 139-amino-acid polypeptide reads, in one-letter code: Large ribosomal subunit protein uL16 (139 aa).

Positions 1-20 (MLMPRRVKHRKQHHPTRRGA) are enriched in basic residues. The segment at 1-24 (MLMPRRVKHRKQHHPTRRGAAKGG) is disordered.

The protein belongs to the universal ribosomal protein uL16 family. Part of the 50S ribosomal subunit.

Functionally, binds 23S rRNA and is also seen to make contacts with the A and possibly P site tRNAs. The sequence is that of Large ribosomal subunit protein uL16 from Nocardioides sp. (strain ATCC BAA-499 / JS614).